We begin with the raw amino-acid sequence, 498 residues long: Alpha-amylase A (498 aa).

The first 21 residues, 1–21, serve as a signal peptide directing secretion; the sequence is MMVAWWSLFLYGLQVAAPALA. The cysteines at positions 51 and 59 are disulfide-linked. Substrate is bound by residues Gln-56 and Trp-104. Asn-142 contacts Ca(2+). Residue His-143 coordinates substrate. Cysteines 171 and 185 form a disulfide. 2 residues coordinate Ca(2+): Glu-183 and Asp-196. Asn-218 is a glycosylation site (N-linked (GlcNAc...) asparagine). Residue Arg-225 participates in substrate binding. Residues Asp-227, His-231, and Glu-251 each coordinate Ca(2+). Asp-227 (nucleophile) is an active-site residue. Substrate is bound at residue 230-231; sequence KH. The active-site Proton donor is Glu-251. Substrate is bound at residue Gly-255. Cys-261 and Cys-304 are joined by a disulfide. Substrate contacts are provided by Asp-318 and Arg-365. A disulfide bridge links Cys-461 with Cys-496.

This sequence belongs to the glycosyl hydrolase 13 family. The cofactor is Ca(2+).

The catalysed reaction is Endohydrolysis of (1-&gt;4)-alpha-D-glucosidic linkages in polysaccharides containing three or more (1-&gt;4)-alpha-linked D-glucose units.. The protein is Alpha-amylase A (amyA) of Aspergillus awamori (Black koji mold).